The primary structure comprises 255 residues: Staphylococcal secretory antigen ssaA1 (255 aa).

Positions Met-1 to Ala-26 are cleaved as a signal peptide. 3 repeat units span residues Tyr-75–Tyr-78, Tyr-88–Tyr-91, and Tyr-98–Tyr-101. The 3 X 4 AA repeats of Y-N-N-Y stretch occupies residues Tyr-75 to Tyr-101. The region spanning Ala-134–His-255 is the Peptidase C51 domain.

It is found in the secreted. Functionally, not known; immunogenic protein. This is Staphylococcal secretory antigen ssaA1 (ssaA1) from Staphylococcus aureus (strain MW2).